A 460-amino-acid polypeptide reads, in one-letter code: Exodeoxyribonuclease 7 large subunit (460 aa).

The interval 438–460 is disordered; sequence ARVEKVNREEEKQSGSQKNGTRD. The segment covering 439–450 has biased composition (basic and acidic residues); it reads RVEKVNREEEKQ. Residues 451–460 are compositionally biased toward polar residues; it reads SGSQKNGTRD.

It belongs to the XseA family. As to quaternary structure, heterooligomer composed of large and small subunits.

The protein localises to the cytoplasm. It carries out the reaction Exonucleolytic cleavage in either 5'- to 3'- or 3'- to 5'-direction to yield nucleoside 5'-phosphates.. Its function is as follows. Bidirectionally degrades single-stranded DNA into large acid-insoluble oligonucleotides, which are then degraded further into small acid-soluble oligonucleotides. The polypeptide is Exodeoxyribonuclease 7 large subunit (Brevibacillus brevis (strain 47 / JCM 6285 / NBRC 100599)).